Consider the following 335-residue polypeptide: Coiled-coil domain-containing protein 68 (335 aa).

Residues 101-305 (QLLEMNKENE…KTQVALSSET (205 aa)) adopt a coiled-coil conformation.

In terms of assembly, interacts with CEP170. Expressed in bone marrow, colon, small intestine, spleen, testis, trachea and cutaneous T-cell lymphoma (CTCL).

It localises to the cytoplasm. The protein localises to the cytoskeleton. Its subcellular location is the microtubule organizing center. It is found in the centrosome. The protein resides in the centriole. Its function is as follows. Centriolar protein required for centriole subdistal appendage assembly and microtubule anchoring in interphase cells. Together with CCDC120, cooperate with subdistal appendage components ODF2, NIN and CEP170 for hierarchical subdistal appendage assembly. This Homo sapiens (Human) protein is Coiled-coil domain-containing protein 68 (CCDC68).